The primary structure comprises 209 residues: uncharacterized protein (209 aa).

Positions 39 to 75 form a coiled coil; the sequence is VSFENFMERYDTMEKNIQDLQNKYEEMANNLVAVMAD. A disordered region spans residues 103–131; sequence TMKDATSLPPPNPNNEQSVFTNGSPTSGK. Positions 116-129 are enriched in polar residues; the sequence is NNEQSVFTNGSPTS.

The protein belongs to the asfivirus K205R family.

It is found in the host cytoplasm. Its function is as follows. Induces host endoplasmic reticulum stress and consequently activates autophagy and NF-kappa-B signaling pathway. In turn, may induce autophagy-mediated STING1 degradation and innate immune evasion. This is an uncharacterized protein from Ornithodoros (relapsing fever ticks).